An 84-amino-acid polypeptide reads, in one-letter code: Defensin-like protein 199 (84 aa).

Positions 1–24 (MAITMRTLVAFVFTIFFIISFVHS) are cleaved as a signal peptide. Cystine bridges form between cysteine 40–cysteine 80, cysteine 47–cysteine 72, cysteine 56–cysteine 78, and cysteine 60–cysteine 79.

Belongs to the DEFL family.

It localises to the secreted. The chain is Defensin-like protein 199 from Arabidopsis thaliana (Mouse-ear cress).